Reading from the N-terminus, the 115-residue chain is Putative TGFB1-induced anti-apoptotic factor 1 (115 aa).

As to expression, not detectable in normal kidney and liver. Up-regulated in chronic and acute allograft rejection: expressed in the inflammatory infiltrate and in tubular epithelial cells.

It localises to the nucleus. Functionally, inhibits the cytotoxic effects of TNF-alpha and overexpressed TNF receptor adapters TRADD, FADD, and RIPK1. Involved in TGF-beta1 inhibition of IkappaB-alpha expression and suppression of TNF-mediated IkappaB-alpha degradation. The protein is Putative TGFB1-induced anti-apoptotic factor 1 (MYO18A) of Homo sapiens (Human).